The primary structure comprises 62 residues: SPbeta prophage-derived uncharacterized protein YonU (62 aa).

A coiled-coil region spans residues 1-32 (MEKKFLDAIQQLTKELEMLKKDIDSIKEATVR).

The protein is SPbeta prophage-derived uncharacterized protein YonU (yonU) of Bacillus subtilis (strain 168).